The primary structure comprises 205 residues: Imidazoleglycerol-phosphate dehydratase (205 aa).

It belongs to the imidazoleglycerol-phosphate dehydratase family.

It carries out the reaction D-erythro-1-(imidazol-4-yl)glycerol 3-phosphate = 3-(imidazol-4-yl)-2-oxopropyl phosphate + H2O. Its pathway is amino-acid biosynthesis; L-histidine biosynthesis; L-histidine from 5-phospho-alpha-D-ribose 1-diphosphate: step 6/9. This is Imidazoleglycerol-phosphate dehydratase (HIS3) from Phaffia rhodozyma (Yeast).